The following is a 374-amino-acid chain: MAEKTFINRLQLTDFRNYGSASLRLDGRHVVLTGNNGSGKTNLMEAVSFLSPGRGLRRAVLSDVARAGAASGFSIFASLEGMAGDVELGTGSEVLDETAVRRLRINGASVRSVDELTDHLRVLWLTPAMDGLFTGSSSERRRFLDRLVLSIDPQHGRRASDFERAMRSRNKLLSEGRFDASWLAGIEQQMAALGIAMALARQEMMRLLAALIEQRREPETFPGADLMLSGFMDEHAGTAAIDLEDTYRDSLAGSRGRDAAAGRTLEGPHRSDLLVRHREKDMEAERCSTGEQKALLIGLILAHAELVATMTGFAPILLLDEIAAHLDEGRRAALFDRIDVLGGQAFMTGTDAQMFASLGDRAQFVTVDDGHLSL.

34-41 (GNNGSGKT) contacts ATP.

The protein belongs to the RecF family.

Its subcellular location is the cytoplasm. In terms of biological role, the RecF protein is involved in DNA metabolism; it is required for DNA replication and normal SOS inducibility. RecF binds preferentially to single-stranded, linear DNA. It also seems to bind ATP. This is DNA replication and repair protein RecF from Allorhizobium ampelinum (strain ATCC BAA-846 / DSM 112012 / S4) (Agrobacterium vitis (strain S4)).